Here is a 132-residue protein sequence, read N- to C-terminus: Large-conductance mechanosensitive channel (132 aa).

Transmembrane regions (helical) follow at residues 14–34 (VIDLAVGVVIGAAFGKIVSSL), 38–58 (IITPLLGMVLGGVDFTGLKIT), and 69–89 (FIQTIFDFLIIAAAIFMFVKV).

This sequence belongs to the MscL family. In terms of assembly, homopentamer.

It is found in the cell membrane. Its function is as follows. Channel that opens in response to stretch forces in the membrane lipid bilayer. May participate in the regulation of osmotic pressure changes within the cell. The sequence is that of Large-conductance mechanosensitive channel from Bacillus thuringiensis (strain Al Hakam).